A 419-amino-acid chain; its full sequence is MEKFRVIGSTQPLQGEVTISGAKNAALPILFASILAEEPVEVANVPHLRDIDTTMELLERLGAKVERNGSVHVDAGPINQYCAPYDLVKTMRASIWALGPLVARFGQGQVSLPGGCAIGARPVDLHIHGLEQLGATITLEDGYVKAHVDGRLQGAHIVMDKVSVGATITIMCAATLAEGTTVLDNAAREPEIVDTAMFLNKLGAKISGAGTDSITIEGVERLGGGKHAVVPDRIETGTFLVAAAVSRGKIVCRNTHAHLLEAVLAKLEEAGAEIECGEDWISLDMTGRELKAVTVRTAPHPGFPTDMQAQFTLLNMMAKGGGVITETIFENRFMHVPELKRMGAKAEIEGNTVICGDVDRLSGAQVMATDLRASASLVIAGCIAKGETIVDRIYHIDRGYERIEDKLSALGANIERFRD.

Residue 23–24 (KN) coordinates phosphoenolpyruvate. Arg92 is a UDP-N-acetyl-alpha-D-glucosamine binding site. The active-site Proton donor is the Cys116. Cys116 is modified (2-(S-cysteinyl)pyruvic acid O-phosphothioketal). UDP-N-acetyl-alpha-D-glucosamine-binding positions include 121 to 125 (RPVDL), 161 to 164 (KVSV), Asp306, and Ile328.

Belongs to the EPSP synthase family. MurA subfamily.

The protein resides in the cytoplasm. It carries out the reaction phosphoenolpyruvate + UDP-N-acetyl-alpha-D-glucosamine = UDP-N-acetyl-3-O-(1-carboxyvinyl)-alpha-D-glucosamine + phosphate. The protein operates within cell wall biogenesis; peptidoglycan biosynthesis. Functionally, cell wall formation. Adds enolpyruvyl to UDP-N-acetylglucosamine. The polypeptide is UDP-N-acetylglucosamine 1-carboxyvinyltransferase (Vibrio cholerae serotype O1 (strain ATCC 39541 / Classical Ogawa 395 / O395)).